A 230-amino-acid polypeptide reads, in one-letter code: Secretory carrier-associated membrane protein 4 (230 aa).

At 1–39 (MAGKENNFPPLPPFLPLKPCFYQDFSDEIPVEHQVLVKR) the chain is on the cytoplasmic side. The next 4 helical transmembrane spans lie at 40–60 (IYRLWMFYCATLGVNLVACLA), 61–81 (WWIAGGAGANFGLALLWLVLF), 106–126 (MTFFFIFGAQFVLTVIQAIGF), and 149–169 (VVMLVPAILFSLSALVMAVTI). Residues 170–230 (VKVHRIYRGA…SYSSSGGHWP (61 aa)) lie on the Cytoplasmic side of the membrane. T194 carries the post-translational modification Phosphothreonine.

It belongs to the SCAMP family.

It is found in the membrane. In terms of biological role, probably involved in membrane protein trafficking. The sequence is that of Secretory carrier-associated membrane protein 4 (Scamp4) from Mus musculus (Mouse).